The following is an 83-amino-acid chain: Cell division protein ZapB (83 aa).

The stretch at 7–80 forms a coiled coil; the sequence is EMLEKLEAKV…RVRTLLGKMD (74 aa).

This sequence belongs to the ZapB family. Homodimer. The ends of the coiled-coil dimer bind to each other, forming polymers. Interacts with FtsZ.

It localises to the cytoplasm. Functionally, non-essential, abundant cell division factor that is required for proper Z-ring formation. It is recruited early to the divisome by direct interaction with FtsZ, stimulating Z-ring assembly and thereby promoting cell division earlier in the cell cycle. Its recruitment to the Z-ring requires functional FtsA or ZipA. The sequence is that of Cell division protein ZapB from Photobacterium profundum (strain SS9).